A 67-amino-acid polypeptide reads, in one-letter code: DNA-directed RNA polymerase subunit omega (67 aa).

The protein belongs to the RNA polymerase subunit omega family. The RNAP catalytic core consists of 2 alpha, 1 beta, 1 beta' and 1 omega subunit. When a sigma factor is associated with the core the holoenzyme is formed, which can initiate transcription.

It catalyses the reaction RNA(n) + a ribonucleoside 5'-triphosphate = RNA(n+1) + diphosphate. Promotes RNA polymerase assembly. Latches the N- and C-terminal regions of the beta' subunit thereby facilitating its interaction with the beta and alpha subunits. This Acidovorax ebreus (strain TPSY) (Diaphorobacter sp. (strain TPSY)) protein is DNA-directed RNA polymerase subunit omega.